The primary structure comprises 1111 residues: uncharacterized protein (1111 aa).

The N-terminal stretch at 1 to 31 is a signal peptide; the sequence is MIRKLMKIPPFFTALFASAMFTLSVSQGVLA. The next 11 membrane-spanning stretches (helical) occupy residues 490 to 510, 538 to 558, 572 to 592, 620 to 640, 644 to 664, 694 to 714, 797 to 817, 840 to 860, 885 to 905, 922 to 942, and 1003 to 1023; these read LPYLLMYFLGLFIVGGAIFKF, LALLLTAFLTLSSTLWFLAVC, FWHWSFSMAGYWWFFTFWISL, IIVVVVLLLNTSVFSNVTDAG, DVLGQINTIAALIFCAAIIAP, IPVGLIVLIVLGYYYTALNLI, FIWTALLGIFYYVWSDLVTVV, SITLFNLLVALVIVGITYVLV, ITTLLTYIFIAIGGAWAFATL, GLGFGMQEIFANFVSGIILLF, and LVISVGVAYGSDLTLVRQLLL.

The protein belongs to the MscS (TC 1.A.23) family.

It localises to the cell membrane. This is an uncharacterized protein from Haemophilus influenzae (strain ATCC 51907 / DSM 11121 / KW20 / Rd).